A 415-amino-acid chain; its full sequence is Transcriptional regulator fogI (415 aa).

A DNA-binding region (zn(2)-C6 fungal-type) is located at residues 12–39; the sequence is CNACNESKVRCSQTKPTCARCERNKTTC. The disordered stretch occupies residues 50–153; the sequence is DAPPISLSHS…ILSPANLDLP (104 aa). Low complexity-rich tracts occupy residues 80–102 and 123–135; these read VHIPNATATANATTTANYTSTTT and QFFAQQQPHHQQP.

The protein localises to the nucleus. Functionally, transcriptional regulator that postively regulates the expression of the gene cluster that mediates the biosynthesis of flavoglaucin and congeners (including aspergin, dihydroauroglaucin and auroglaucin), prenylated salicylaldehyde derivatives carrying a saturated or an unsaturated C-7 side chain. This Aspergillus ruber (strain CBS 135680) protein is Transcriptional regulator fogI.